Reading from the N-terminus, the 405-residue chain is Bifunctional enzyme IspD/IspF (405 aa).

Residues 1–246 are 2-C-methyl-D-erythritol 4-phosphate cytidylyltransferase; it reads MLQMPSKQPI…KLSASLLPDV (246 aa). Residues 247-405 are 2-C-methyl-D-erythritol 2,4-cyclodiphosphate synthase; it reads RTGNGYDVHQ…TATVVYRGRT (159 aa). D253 and H255 together coordinate a divalent metal cation. Residues 253 to 255 and 279 to 280 contribute to the 4-CDP-2-C-methyl-D-erythritol 2-phosphate site; these read DVH and HS. H287 contributes to the a divalent metal cation binding site. 4-CDP-2-C-methyl-D-erythritol 2-phosphate is bound by residues 301–303, 377–380, F384, and R387; these read DIG and TTNE.

In the N-terminal section; belongs to the IspD/TarI cytidylyltransferase family. IspD subfamily. The protein in the C-terminal section; belongs to the IspF family. Requires a divalent metal cation as cofactor.

The enzyme catalyses 2-C-methyl-D-erythritol 4-phosphate + CTP + H(+) = 4-CDP-2-C-methyl-D-erythritol + diphosphate. The catalysed reaction is 4-CDP-2-C-methyl-D-erythritol 2-phosphate = 2-C-methyl-D-erythritol 2,4-cyclic diphosphate + CMP. It functions in the pathway isoprenoid biosynthesis; isopentenyl diphosphate biosynthesis via DXP pathway; isopentenyl diphosphate from 1-deoxy-D-xylulose 5-phosphate: step 2/6. It participates in isoprenoid biosynthesis; isopentenyl diphosphate biosynthesis via DXP pathway; isopentenyl diphosphate from 1-deoxy-D-xylulose 5-phosphate: step 4/6. In terms of biological role, bifunctional enzyme that catalyzes the formation of 4-diphosphocytidyl-2-C-methyl-D-erythritol from CTP and 2-C-methyl-D-erythritol 4-phosphate (MEP) (IspD), and catalyzes the conversion of 4-diphosphocytidyl-2-C-methyl-D-erythritol 2-phosphate (CDP-ME2P) to 2-C-methyl-D-erythritol 2,4-cyclodiphosphate (ME-CPP) with a corresponding release of cytidine 5-monophosphate (CMP) (IspF). This Rhizobium etli (strain CIAT 652) protein is Bifunctional enzyme IspD/IspF.